The primary structure comprises 64 residues: Large ribosomal subunit protein uL30 (64 aa).

The disordered stretch occupies residues 1-22 (MAKAAKTIKVEQTGSAIRRHHS).

This sequence belongs to the universal ribosomal protein uL30 family. As to quaternary structure, part of the 50S ribosomal subunit.

This Nitrobacter winogradskyi (strain ATCC 25391 / DSM 10237 / CIP 104748 / NCIMB 11846 / Nb-255) protein is Large ribosomal subunit protein uL30.